Reading from the N-terminus, the 544-residue chain is Prolyl 4-hydroxylase subunit alpha-3 (544 aa).

A signal peptide spans 1–19 (MGPAARLAALLAVLAFRAG). A coiled-coil region spans residues 107–131 (LEASENIRALKDGYERVEQDLPAFE). The TPR repeat unit spans residues 227–260 (EDALDHLAFAYFQAGNVLCALNLSREFLLYSPDN). An N-linked (GlcNAc...) asparagine glycan is attached at asparagine 248. The region spanning 422–529 (YAEYLQVVNY…KWVANKWIHE (108 aa)) is the Fe2OG dioxygenase domain. 2 residues coordinate Fe cation: histidine 440 and aspartate 442. Asparagine 482 carries N-linked (GlcNAc...) asparagine glycosylation. Histidine 510 is a Fe cation binding site. Lysine 520 serves as a coordination point for 2-oxoglutarate.

This sequence belongs to the P4HA family. As to quaternary structure, heterotetramer of two alpha-3 chains and two beta chains (the beta chain is the multi-functional PDI). It depends on Fe(2+) as a cofactor. L-ascorbate serves as cofactor. In terms of processing, N-glycosylation plays no role in the catalytic activity.

It localises to the endoplasmic reticulum lumen. It carries out the reaction L-prolyl-[collagen] + 2-oxoglutarate + O2 = trans-4-hydroxy-L-prolyl-[collagen] + succinate + CO2. Catalyzes the post-translational formation of 4-hydroxyproline in -Xaa-Pro-Gly- sequences in collagens and other proteins. The protein is Prolyl 4-hydroxylase subunit alpha-3 (P4HA3) of Bos taurus (Bovine).